The sequence spans 198 residues: MSTNDTRIYLASGSPRRREILEQLGLHLERIHADIDESVRPGEDAVAYTERLAREKAEAGWRVVSSCGLPERPLLAADTTVSQDGEIFGKPEDADDARRMLRAFSGRSHQAITSVAVRDGGKLLVKTSITDVFFKSLSDAEIERYIASGEPFDKAGAYGIQGKAGVFVEHIEGSYTGVMGLPVHETALLLAEFGFELP.

The active-site Proton acceptor is aspartate 78.

Belongs to the Maf family. YhdE subfamily. It depends on a divalent metal cation as a cofactor.

It localises to the cytoplasm. The enzyme catalyses dTTP + H2O = dTMP + diphosphate + H(+). It carries out the reaction UTP + H2O = UMP + diphosphate + H(+). Its function is as follows. Nucleoside triphosphate pyrophosphatase that hydrolyzes dTTP and UTP. May have a dual role in cell division arrest and in preventing the incorporation of modified nucleotides into cellular nucleic acids. The polypeptide is dTTP/UTP pyrophosphatase (Chromobacterium violaceum (strain ATCC 12472 / DSM 30191 / JCM 1249 / CCUG 213 / NBRC 12614 / NCIMB 9131 / NCTC 9757 / MK)).